The chain runs to 588 residues: Zinc finger protein 599 (588 aa).

A KRAB domain is found at 9–80; it reads VSFEDVVVTF…KRGLSQSTCA (72 aa). 14 C2H2-type zinc fingers span residues 199–221, 227–249, 255–277, 283–305, 311–333, 339–361, 367–389, 395–417, 423–445, 451–473, 479–501, 507–529, 535–557, and 563–585; these read YTCT…QQIH, YECN…MRLH, YKCI…QRIH, YECK…NMTH, FLCK…MRIH, YECG…NVTH, YECG…KRTH, FECK…MRIH, YECS…NRTH, LECK…MRIH, YVCR…NRIH, FECK…MRTH, and FECN…RKIH.

Belongs to the krueppel C2H2-type zinc-finger protein family.

It localises to the nucleus. May be involved in transcriptional regulation. The polypeptide is Zinc finger protein 599 (ZNF599) (Homo sapiens (Human)).